Consider the following 194-residue polypeptide: Cysteine and glycine-rich protein 3 (194 aa).

The interval 1–5 (MPNWG) is interaction with TCAP. One can recognise an LIM zinc-binding 1 domain in the interval 10-61 (CGACEKTVYHAEEIQCNGRSFHKTCFHCMACRKALDSTTVAAHESEIYCKVC). The Nuclear localization signal motif lies at 64–69 (RRYGPK). Residues 94-106 (QSPKQARSATTSS) form an interaction with CLF2 region. Phosphoserine is present on residues serine 95 and serine 153. The LIM zinc-binding 2 domain maps to 120–171 (CPRCGKSVYAAEKVMGGGKPWHKTCFRCAICGKSLESTNVTDKDGELYCKVC).

Self-associates. Oligomeric in the cytoplasm and monomeric in the nucleus. Homooligomers preferentially form along the actin cytoskeleton. Interacts with TCAP, LDHD, MYOD1, MYOG, ACTN2, NRAP, MYF6. Interacts (via N-terminus) with GLRX3 (via C-terminus) and PPP3CA; GLRX3 and calcineurin compete for interaction with CSRP3. Interacts with CFL2; the stoichiometry influences F-actin depolymerization and possibly two molecules of CFL2 can interact with one molecule of CSRP3 resulting in the highest functional impact; the interaction is stronger with phosphorylated CFL2.

The protein resides in the nucleus. The protein localises to the cytoplasm. Its subcellular location is the cytoskeleton. It localises to the myofibril. It is found in the sarcomere. The protein resides in the z line. Positive regulator of myogenesis. Acts as a cofactor for myogenic bHLH transcription factors such as MYOD1, and probably MYOG and MYF6. Enhances the DNA-binding activity of the MYOD1:TCF3 isoform E47 complex and may promote formation of a functional MYOD1:TCF3 isoform E47:MEF2A complex involved in myogenesis. Plays a crucial and specific role in the organization of cytosolic structures in cardiomyocytes. Could play a role in mechanical stretch sensing. May be a scaffold protein that promotes the assembly of interacting proteins at Z-line structures. It is essential for calcineurin anchorage to the Z line. Required for stress-induced calcineurin-NFAT activation. The role in regulation of cytoskeleton dynamics by association with CFL2 is reported conflictingly. Proposed to contribute to the maintenance of muscle cell integrity through an actin-based mechanism. Can directly bind to actin filaments, cross-link actin filaments into bundles without polarity selectivity and protect them from dilution- and cofilin-mediated depolymerization; the function seems to involve its self-association. In vitro can inhibit PKC/PRKCA activity. Proposed to be involved in cardiac stress signaling by down-regulating excessive PKC/PRKCA signaling. This chain is Cysteine and glycine-rich protein 3 (CSRP3), found in Bos taurus (Bovine).